Consider the following 380-residue polypeptide: Erythronate-4-phosphate dehydrogenase (380 aa).

Substrate contacts are provided by Ser-45 and Thr-66. Asp-146 serves as a coordination point for NAD(+). Arg-207 is a catalytic residue. An NAD(+)-binding site is contributed by Asp-232. Glu-237 is an active-site residue. His-254 functions as the Proton donor in the catalytic mechanism. Gly-257 lines the NAD(+) pocket. A substrate-binding site is contributed by Tyr-258.

This sequence belongs to the D-isomer specific 2-hydroxyacid dehydrogenase family. PdxB subfamily. As to quaternary structure, homodimer.

The protein localises to the cytoplasm. The catalysed reaction is 4-phospho-D-erythronate + NAD(+) = (R)-3-hydroxy-2-oxo-4-phosphooxybutanoate + NADH + H(+). The protein operates within cofactor biosynthesis; pyridoxine 5'-phosphate biosynthesis; pyridoxine 5'-phosphate from D-erythrose 4-phosphate: step 2/5. In terms of biological role, catalyzes the oxidation of erythronate-4-phosphate to 3-hydroxy-2-oxo-4-phosphonooxybutanoate. This Marinomonas sp. (strain MWYL1) protein is Erythronate-4-phosphate dehydrogenase.